The primary structure comprises 166 residues: Small ribosomal subunit protein uS9 (166 aa).

Residues 135-166 are disordered; the sequence is KKAGFLTRDPRATERKKYGLKKARKAPQYSKR. Residues 142–151 are compositionally biased toward basic and acidic residues; that stretch reads RDPRATERKK. Positions 152–166 are enriched in basic residues; sequence YGLKKARKAPQYSKR.

This sequence belongs to the universal ribosomal protein uS9 family.

The protein is Small ribosomal subunit protein uS9 of Mycobacterium avium (strain 104).